The sequence spans 231 residues: Probable amino-acid ABC transporter permease protein y4tG (231 aa).

6 consecutive transmembrane segments (helical) span residues 9-29, 32-52, 64-84, 86-106, 161-181, and 196-216; these read TGNG…MGLI, LQAA…FAVL, AAVL…FFLY, VLPE…ALGI, YLVS…VEML, and VPLS…SALV. The ABC transmembrane type-1 domain maps to 28-217; it reads LITTLQAAFL…LTIVASALVR (190 aa).

This sequence belongs to the binding-protein-dependent transport system permease family. HisMQ subfamily.

The protein localises to the cell inner membrane. Its function is as follows. Probably part of the binding-protein-dependent transport system y4tEFGH for an amino acid. Probably responsible for the translocation of the substrate across the membrane. The protein is Probable amino-acid ABC transporter permease protein y4tG of Sinorhizobium fredii (strain NBRC 101917 / NGR234).